A 160-amino-acid chain; its full sequence is Large ribosomal subunit protein uL22c (160 aa).

Belongs to the universal ribosomal protein uL22 family. In terms of assembly, part of the 50S ribosomal subunit.

The protein localises to the plastid. It is found in the chloroplast. Functionally, this protein binds specifically to 23S rRNA. Its function is as follows. The globular domain of the protein is located near the polypeptide exit tunnel on the outside of the subunit, while an extended beta-hairpin is found that lines the wall of the exit tunnel in the center of the 70S ribosome. This chain is Large ribosomal subunit protein uL22c (rpl22), found in Aethionema grandiflorum (Persian stone-cress).